The primary structure comprises 25 residues: Secapin-1 (25 aa).

Cys-9 and Cys-20 are joined by a disulfide.

As to expression, expressed by the venom gland.

The protein resides in the secreted. Functionally, serine protease inhibitor which exhibits antifibrinolytic, antielastolytic and antimicrobial activities. Displays antimicrobial activity against bacteria and fungi. Likely functions in the innate immune response to microbial infection and possibly in the venom, as an antifibrinolytic agent. This Apis mellifera (Honeybee) protein is Secapin-1.